Here is a 505-residue protein sequence, read N- to C-terminus: Protein amnionless (505 aa).

Residues methionine 1–alanine 20 form the signal peptide. Topologically, residues threonine 21–serine 344 are extracellular. Residues serine 345–alanine 365 form a helical membrane-spanning segment. The Cytoplasmic portion of the chain corresponds to histidine 366–isoleucine 505. The tract at residues glycine 451–valine 482 is disordered. Positions glutamate 473–valine 482 are enriched in basic and acidic residues.

Specifically expressed in nephrocytes.

The protein localises to the cell membrane. Functionally, required in the nephrocyte for normal uptake of proteins and elimination of toxins, and for maintenance of endocytic trafficking structures. May function together with Cubn. The polypeptide is Protein amnionless (Drosophila melanogaster (Fruit fly)).